The following is a 160-amino-acid chain: Protein BOLA1, chloroplastic (160 aa).

Residues 1–50 constitute a chloroplast transit peptide; that stretch reads MFSSSIRLIVSGFHRTQPLKSPVNSPSVFISVPKFFNSESKSTGTGSRSV. Residues 39 to 61 are compositionally biased toward polar residues; that stretch reads ESKSTGTGSRSVAMSSVEKTGSD. The interval 39-66 is disordered; it reads ESKSTGTGSRSVAMSSVEKTGSDSGAIE.

It belongs to the bolA/yrbA family. As to quaternary structure, interacts in vitro with GRXS14, GRXS15, GRXS16 and GRXS17, but not with GRXC5. Interacts in vivo only with GRXS14 and GRXS16.

Its subcellular location is the plastid. It is found in the chloroplast. Functionally, may act either alone or in interaction with glutaredoxin as a redox-regulated transcriptional regulator, or as a factor regulating Fe-S cluster biogenesis. The glutaredoxin-BOLA1 heterodimers bind a labile, oxygen sensitive iron-sulfur cluster. This Arabidopsis thaliana (Mouse-ear cress) protein is Protein BOLA1, chloroplastic.